The primary structure comprises 246 residues: D-erythrulose reductase (246 aa).

NADP(+) is bound at residue 13–41 (LVTGAGKGIGRAVAVALCKAGARVTALSR). Ser138 serves as a coordination point for substrate. The active-site Proton acceptor is the Tyr151. NADP(+) is bound at residue Lys155.

The protein belongs to the short-chain dehydrogenases/reductases (SDR) family. As to quaternary structure, homotetramer. The N-terminus is blocked. In terms of tissue distribution, highly expressed in kidney, and also found in high amounts in liver and testis. Low expression seen in all other tissues tested.

It localises to the cytoplasm. It carries out the reaction D-threitol + NADP(+) = D-erythrulose + NADPH + H(+). It catalyses the reaction xylitol + NADP(+) = L-xylulose + NADPH + H(+). Its function is as follows. Catalyzes the reduction of D-erythrulose to D-threitol with the concomitant oxidation of NAD(P)H to NAD(P)(+). NADH is less effective than NADPH. May also catalyze the reduction of L-xylulose. The chain is D-erythrulose reductase (DER) from Gallus gallus (Chicken).